Consider the following 694-residue polypeptide: Polyribonucleotide nucleotidyltransferase (694 aa).

2 residues coordinate Mg(2+): aspartate 485 and aspartate 491. Residues 552–611 (PRIETMQIKPNKIATVIGPGGKQIRQIIEEAGVQIDINDSGLVSISASSPQAIEKAKSMI) form the KH domain. Positions 621-689 (GKIYEGRVTS…EKGQYKLSHK (69 aa)) constitute an S1 motif domain.

The protein belongs to the polyribonucleotide nucleotidyltransferase family. Mg(2+) is required as a cofactor.

The protein resides in the cytoplasm. It carries out the reaction RNA(n+1) + phosphate = RNA(n) + a ribonucleoside 5'-diphosphate. Its function is as follows. Involved in mRNA degradation. Catalyzes the phosphorolysis of single-stranded polyribonucleotides processively in the 3'- to 5'-direction. This chain is Polyribonucleotide nucleotidyltransferase, found in Chlamydia caviae (strain ATCC VR-813 / DSM 19441 / 03DC25 / GPIC) (Chlamydophila caviae).